Reading from the N-terminus, the 130-residue chain is Mating-type-like protein A1 (130 aa).

Residues 68-127 constitute a DNA-binding region (homeobox); that stretch reads TYTTRKPLPAKAKLQLVETFSKKRYLTRCEKHQLAVQCGITTNQVQIWFANRRKRSKDLN.

The protein belongs to the MATA1 family.

Its subcellular location is the nucleus. Functionally, mating type proteins are sequence specific DNA-binding proteins that act as master switches in yeast differentiation by controlling gene expression in a cell type-specific fashion. This Candida glabrata (strain ATCC 2001 / BCRC 20586 / JCM 3761 / NBRC 0622 / NRRL Y-65 / CBS 138) (Yeast) protein is Mating-type-like protein A1 (MTL1A1).